The chain runs to 341 residues: S-adenosylmethionine:tRNA ribosyltransferase-isomerase (341 aa).

This sequence belongs to the QueA family. Monomer.

Its subcellular location is the cytoplasm. The enzyme catalyses 7-aminomethyl-7-carbaguanosine(34) in tRNA + S-adenosyl-L-methionine = epoxyqueuosine(34) in tRNA + adenine + L-methionine + 2 H(+). It functions in the pathway tRNA modification; tRNA-queuosine biosynthesis. Functionally, transfers and isomerizes the ribose moiety from AdoMet to the 7-aminomethyl group of 7-deazaguanine (preQ1-tRNA) to give epoxyqueuosine (oQ-tRNA). The chain is S-adenosylmethionine:tRNA ribosyltransferase-isomerase from Clostridium botulinum (strain Loch Maree / Type A3).